The following is a 478-amino-acid chain: Sodium-dependent phosphate transport protein 3 (478 aa).

Residues Asn28, Asn47, Asn56, and Asn69 are each glycosylated (N-linked (GlcNAc...) asparagine). 10 helical membrane-spanning segments follow: residues 98 to 118 (ISYGIILTLIPSGYLAGIFGA), 130 to 150 (SLLTLFTPLAADFGVILVIVI), 183 to 203 (SIAGSGAAFGSFIILCVGGLI), 211 to 231 (FIFYIFGSIGCVCCVLWFTVI), 273 to 293 (LPLWAIFMGFFSHFWLCTIII), 317 to 337 (LPFIAASSCTILGGQMADFLL), 341 to 361 (LLSLITVRKLFSSLGLLLPSL), 363 to 383 (AVALPFVTSSYIATIVLLILI), 405 to 425 (YASFLMGISRGFGLTAGIISS), and 442 to 462 (NVFFLSAAVNMFGLIFYLIFG).

Belongs to the major facilitator superfamily. Sodium/anion cotransporter family. In terms of tissue distribution, expressed in the liver, kidney, placenta, lung and thyroid (at protein level).

It is found in the apical cell membrane. It carries out the reaction 3 Na(+)(out) + phosphate(out) = 3 Na(+)(in) + phosphate(in). It catalyses the reaction urate(out) + n chloride(in) = urate(in) + n chloride(out). In terms of biological role, acts as a membrane potential-dependent organic anion transporter, the transport requires a low concentration of chloride ions. Mediates chloride-dependent transport of urate. Can actively transport inorganic phosphate into cells via Na(+) cotransport. This is Sodium-dependent phosphate transport protein 3 (Slc17a2) from Mus musculus (Mouse).